The following is a 155-amino-acid chain: HTH-type transcriptional regulator IscR (155 aa).

The HTH rrf2-type domain maps to 2–136; that stretch reads KLSTKGRYAM…HQTRLSDIIK (135 aa). Positions 30-53 form a DNA-binding region, H-T-H motif; it reads LAEVSKRQDISLPYLEQLFVKLRR. A heme regulatory motif (HRM) region spans residues 141 to 145; the sequence is PCPAV. C142 contributes to the [2Fe-2S] cluster binding site.

[2Fe-2S] cluster is required as a cofactor.

Its function is as follows. Regulates the transcription of several operons and genes involved in the biogenesis of Fe-S clusters and Fe-S-containing proteins. Functions as a transcriptional repressor of genes involved in iron metabolism by directly binding to the promoter region of genes preceded by the Iron-Rhodo-box motif. Binds to iscR and hemP promoter regions independently of an Fe-S cluster, but their transcriptional repression is Fe-S cluster-dependent. Seems to activate some target genes in a Fe-S cluster-independent manner. Negatively regulates its own transcription in the presence of iron only. The polypeptide is HTH-type transcriptional regulator IscR (Cereibacter sphaeroides (strain ATCC 17023 / DSM 158 / JCM 6121 / CCUG 31486 / LMG 2827 / NBRC 12203 / NCIMB 8253 / ATH 2.4.1.) (Rhodobacter sphaeroides)).